A 196-amino-acid polypeptide reads, in one-letter code: uncharacterized protein (196 aa).

The first 21 residues, 1–21 (MNGKQCFCFFLFHLFYTGLFA), serve as a signal peptide directing secretion. Residue cysteine 22 is the site of N-palmitoyl cysteine attachment. Cysteine 22 carries the S-diacylglycerol cysteine lipid modification.

The protein resides in the cell membrane. This is an uncharacterized protein from Treponema pallidum (strain Nichols).